The following is a 236-amino-acid chain: tRNA1(Val) (adenine(37)-N6)-methyltransferase (236 aa).

The protein belongs to the methyltransferase superfamily. tRNA (adenine-N(6)-)-methyltransferase family.

It localises to the cytoplasm. It catalyses the reaction adenosine(37) in tRNA1(Val) + S-adenosyl-L-methionine = N(6)-methyladenosine(37) in tRNA1(Val) + S-adenosyl-L-homocysteine + H(+). In terms of biological role, specifically methylates the adenine in position 37 of tRNA(1)(Val) (anticodon cmo5UAC). This chain is tRNA1(Val) (adenine(37)-N6)-methyltransferase, found in Actinobacillus succinogenes (strain ATCC 55618 / DSM 22257 / CCUG 43843 / 130Z).